We begin with the raw amino-acid sequence, 403 residues long: S-adenosylmethionine synthase (403 aa).

His15 lines the ATP pocket. Residue Asp17 participates in Mg(2+) binding. K(+) is bound at residue Glu43. L-methionine contacts are provided by Glu56 and Gln99. Residues 99 to 109 (QSPDINQGVDR) are flexible loop. Residues 166–168 (DAK), 232–233 (KF), Asp241, 247–248 (RK), Ala264, and Lys268 contribute to the ATP site. Residue Asp241 participates in L-methionine binding. Lys272 provides a ligand contact to L-methionine.

It belongs to the AdoMet synthase family. In terms of assembly, homotetramer; dimer of dimers. Mg(2+) serves as cofactor. Requires K(+) as cofactor.

Its subcellular location is the cytoplasm. It carries out the reaction L-methionine + ATP + H2O = S-adenosyl-L-methionine + phosphate + diphosphate. It participates in amino-acid biosynthesis; S-adenosyl-L-methionine biosynthesis; S-adenosyl-L-methionine from L-methionine: step 1/1. Functionally, catalyzes the formation of S-adenosylmethionine (AdoMet) from methionine and ATP. The overall synthetic reaction is composed of two sequential steps, AdoMet formation and the subsequent tripolyphosphate hydrolysis which occurs prior to release of AdoMet from the enzyme. This chain is S-adenosylmethionine synthase, found in Xylella fastidiosa (strain M12).